Reading from the N-terminus, the 154-residue chain is Low molecular weight protein-tyrosine-phosphatase PtpA (154 aa).

Cys-8 functions as the Nucleophile in the catalytic mechanism. Residue Arg-14 is part of the active site. Catalysis depends on Asp-120, which acts as the Proton donor.

Belongs to the low molecular weight phosphotyrosine protein phosphatase family. As to quaternary structure, interacts with host CORO1A. Phosphorylations at Tyr-122 and Tyr-123 are essential for phosphatase activity.

The protein localises to the secreted. It carries out the reaction O-phospho-L-tyrosyl-[protein] + H2O = L-tyrosyl-[protein] + phosphate. Its function is as follows. Secreted tyrosine phosphatase that plays a critical role during infection as a bacterial effector protein that counteracts host defenses. Required for intramacrophage survival. The protein is Low molecular weight protein-tyrosine-phosphatase PtpA (ptpA) of Staphylococcus aureus (strain bovine RF122 / ET3-1).